The following is a 264-amino-acid chain: uncharacterized protein (264 aa).

The chain crosses the membrane as a helical span at residues 7 to 27 (LTLGICLVLLIILIVGYVIMT).

This sequence belongs to the staphylococcal tandem lipoprotein family.

It localises to the cell membrane. This is an uncharacterized protein from Staphylococcus aureus (strain MW2).